The following is a 394-amino-acid chain: Phosphoglycerate kinase (394 aa).

Residues 21-23 (DFN), Arg36, 59-62 (HLGR), Arg118, and Arg151 contribute to the substrate site. Phosphoserine is present on Ser183. An ATP-binding site is contributed by Lys201. Residue Thr299 is modified to Phosphothreonine. ATP contacts are provided by residues Glu323 and 350-353 (GGDS).

It belongs to the phosphoglycerate kinase family. In terms of assembly, monomer.

It is found in the cytoplasm. The enzyme catalyses (2R)-3-phosphoglycerate + ATP = (2R)-3-phospho-glyceroyl phosphate + ADP. It functions in the pathway carbohydrate degradation; glycolysis; pyruvate from D-glyceraldehyde 3-phosphate: step 2/5. In Geobacillus kaustophilus (strain HTA426), this protein is Phosphoglycerate kinase.